Consider the following 466-residue polypeptide: Ribulose bisphosphate carboxylase large chain (466 aa).

Residue Lys-5 is modified to N6,N6,N6-trimethyllysine. Asn-114 and Thr-164 together coordinate substrate. Lys-166 acts as the Proton acceptor in catalysis. A substrate-binding site is contributed by Lys-168. Residues Lys-192, Asp-194, and Glu-195 each contribute to the Mg(2+) site. The residue at position 192 (Lys-192) is an N6-carboxylysine. His-285 serves as the catalytic Proton acceptor. The substrate site is built by Arg-286, His-318, and Ser-370.

The protein belongs to the RuBisCO large chain family. Type I subfamily. In terms of assembly, heterohexadecamer of 8 large chains and 8 small chains; disulfide-linked. The disulfide link is formed within the large subunit homodimers. Requires Mg(2+) as cofactor. Post-translationally, the disulfide bond which can form in the large chain dimeric partners within the hexadecamer appears to be associated with oxidative stress and protein turnover.

The protein localises to the plastid. The protein resides in the chloroplast. It catalyses the reaction 2 (2R)-3-phosphoglycerate + 2 H(+) = D-ribulose 1,5-bisphosphate + CO2 + H2O. It carries out the reaction D-ribulose 1,5-bisphosphate + O2 = 2-phosphoglycolate + (2R)-3-phosphoglycerate + 2 H(+). Its function is as follows. RuBisCO catalyzes two reactions: the carboxylation of D-ribulose 1,5-bisphosphate, the primary event in carbon dioxide fixation, as well as the oxidative fragmentation of the pentose substrate in the photorespiration process. Both reactions occur simultaneously and in competition at the same active site. The chain is Ribulose bisphosphate carboxylase large chain from Saururus cernuus (Lizard's tail).